Here is a 376-residue protein sequence, read N- to C-terminus: Growth/differentiation factor 8 (376 aa).

The N-terminal stretch at 1 to 24 is a signal peptide; it reads MIQKPQMYVYIYLFVLIAAGPVDL. Positions 25 to 267 are excised as a propeptide; sequence NEDSEREANV…VTDTPKRSRR (243 aa). Residue Asn72 is glycosylated (N-linked (GlcNAc...) asparagine). 4 cysteine pairs are disulfide-bonded: Cys273–Cys283, Cys282–Cys341, Cys310–Cys373, and Cys314–Cys375.

It belongs to the TGF-beta family. Homodimer; disulfide-linked. Interacts with WFIKKN2, leading to inhibit its activity. Interacts with FSTL3. Synthesized as large precursor molecule that undergoes proteolytic cleavage to generate an N-terminal propeptide and a disulfide linked C-terminal dimer, which is the biologically active molecule. The circulating form consists of a latent complex of the C-terminal dimer and other proteins, including its propeptide, which maintain the C-terminal dimer in a latent, inactive state. Ligand activation requires additional cleavage of the prodomain by a tolloid-like metalloproteinase.

Its subcellular location is the secreted. Acts specifically as a negative regulator of skeletal muscle growth. The protein is Growth/differentiation factor 8 (Mstn) of Rattus norvegicus (Rat).